The primary structure comprises 436 residues: Trigger factor (436 aa).

The PPIase FKBP-type domain occupies 163–248; the sequence is GDTVNIDFDG…VNEIKYKDVP (86 aa).

Belongs to the FKBP-type PPIase family. Tig subfamily.

The protein resides in the cytoplasm. It carries out the reaction [protein]-peptidylproline (omega=180) = [protein]-peptidylproline (omega=0). Functionally, involved in protein export. Acts as a chaperone by maintaining the newly synthesized protein in an open conformation. Functions as a peptidyl-prolyl cis-trans isomerase. The protein is Trigger factor of Staphylococcus saprophyticus subsp. saprophyticus (strain ATCC 15305 / DSM 20229 / NCIMB 8711 / NCTC 7292 / S-41).